Here is a 47-residue protein sequence, read N- to C-terminus: Variabilin (47 aa).

Residues 32–34 (RGD) carry the Cell attachment site motif.

Contains 2 disulfide bonds. Expressed in salivary glands.

It is found in the secreted. Functionally, potently inhibits platelet aggregation induced by ADP (IC(50)=157 nM, complete inhibition at 514 nM). Also inhibits platelet aggregation induced by collagen and by the thrombin receptor peptide SFLLRNP. Is a potent antagonist of the fibrinogen receptor glycoprotein IIb-IIIa (ITGA2B/ITGB3) and the vitronectin receptor alpha-v/beta-3 (ITGAV/ITGB3). This chain is Variabilin, found in Dermacentor variabilis (American dog tick).